Reading from the N-terminus, the 254-residue chain is Diphthine synthase (254 aa).

S-adenosyl-L-methionine is bound by residues Leu11, Asp86, Ile89, 114-115 (SV), Leu166, Leu207, and His232.

The protein belongs to the diphthine synthase family. In terms of assembly, homodimer.

The enzyme catalyses 2-[(3S)-amino-3-carboxypropyl]-L-histidyl-[translation elongation factor 2] + 3 S-adenosyl-L-methionine = diphthine-[translation elongation factor 2] + 3 S-adenosyl-L-homocysteine + 3 H(+). Its pathway is protein modification; peptidyl-diphthamide biosynthesis. In terms of biological role, S-adenosyl-L-methionine-dependent methyltransferase that catalyzes the trimethylation of the amino group of the modified target histidine residue in translation elongation factor 2 (EF-2), to form an intermediate called diphthine. The three successive methylation reactions represent the second step of diphthamide biosynthesis. This Sulfurisphaera tokodaii (strain DSM 16993 / JCM 10545 / NBRC 100140 / 7) (Sulfolobus tokodaii) protein is Diphthine synthase.